The chain runs to 136 residues: Large ribosomal subunit protein uL16 (136 aa).

The protein belongs to the universal ribosomal protein uL16 family. Part of the 50S ribosomal subunit.

Functionally, binds 23S rRNA and is also seen to make contacts with the A and possibly P site tRNAs. This chain is Large ribosomal subunit protein uL16, found in Bradyrhizobium diazoefficiens (strain JCM 10833 / BCRC 13528 / IAM 13628 / NBRC 14792 / USDA 110).